We begin with the raw amino-acid sequence, 88 residues long: Sec-independent protein translocase protein TatA (88 aa).

A helical membrane pass occupies residues 4–24 (LSIWHWLIVLAVVLVLFVGGG). Residues 45-88 (ADDETMEGSTGSGGHIAPPGPAAGTVQRDASFSGTGRPSGSSTP) form a disordered region. Residues 75–88 (SFSGTGRPSGSSTP) are compositionally biased toward low complexity.

The protein belongs to the TatA/E family. In terms of assembly, the Tat system comprises two distinct complexes: a TatABC complex, containing multiple copies of TatA, TatB and TatC subunits, and a separate TatA complex, containing only TatA subunits. Substrates initially bind to the TatABC complex, which probably triggers association of the separate TatA complex to form the active translocon.

It localises to the cell inner membrane. Part of the twin-arginine translocation (Tat) system that transports large folded proteins containing a characteristic twin-arginine motif in their signal peptide across membranes. TatA could form the protein-conducting channel of the Tat system. In Gluconacetobacter diazotrophicus (strain ATCC 49037 / DSM 5601 / CCUG 37298 / CIP 103539 / LMG 7603 / PAl5), this protein is Sec-independent protein translocase protein TatA.